The sequence spans 341 residues: Methionine import ATP-binding protein MetN 3 (341 aa).

The region spanning 2–241 (ILLENVKKIY…PQQDITKRFV (240 aa)) is the ABC transporter domain. ATP is bound at residue 38–45 (GYSGAGKS).

Belongs to the ABC transporter superfamily. Methionine importer (TC 3.A.1.24) family. As to quaternary structure, the complex is composed of two ATP-binding proteins (MetN), two transmembrane proteins (MetI) and a solute-binding protein (MetQ).

It localises to the cell membrane. The catalysed reaction is L-methionine(out) + ATP + H2O = L-methionine(in) + ADP + phosphate + H(+). It carries out the reaction D-methionine(out) + ATP + H2O = D-methionine(in) + ADP + phosphate + H(+). In terms of biological role, part of the ABC transporter complex MetNIQ involved in methionine import. Responsible for energy coupling to the transport system. In Bacillus anthracis, this protein is Methionine import ATP-binding protein MetN 3.